The chain runs to 276 residues: Proteasome subunit beta type-8 (276 aa).

Positions 1–72 are cleaved as a propeptide — removed in mature form; that stretch reads MALLDLCGAP…RKVQIEMAHG (72 aa). T73 acts as the Nucleophile in catalysis.

This sequence belongs to the peptidase T1B family. As to quaternary structure, the 26S proteasome consists of a 20S proteasome core and two 19S regulatory subunits. The 20S proteasome core is composed of 28 subunits that are arranged in four stacked rings, resulting in a barrel-shaped structure. The two end rings are each formed by seven alpha subunits, and the two central rings are each formed by seven beta subunits. The catalytic chamber with the active sites is on the inside of the barrel. Component of the immunoproteasome, where it displaces the equivalent housekeeping subunit PSMB5. Component of the spermatoproteasome, a form of the proteasome specifically found in testis. Directly interacts with POMP. Interacts with TAP1. In terms of processing, autocleaved. The resulting N-terminal Thr residue of the mature subunit is responsible for the nucleophile proteolytic activity.

Its subcellular location is the cytoplasm. It is found in the nucleus. The enzyme catalyses Cleavage of peptide bonds with very broad specificity.. In terms of biological role, the proteasome is a multicatalytic proteinase complex which is characterized by its ability to cleave peptides with Arg, Phe, Tyr, Leu, and Glu adjacent to the leaving group at neutral or slightly basic pH. The proteasome has an ATP-dependent proteolytic activity. This subunit is involved in antigen processing to generate class I binding peptides. May participate in the generation of spliced peptides resulting from the ligation of two separate proteasomal cleavage products that are not contiguous in the parental protein. Required for adipocyte differentiation. This is Proteasome subunit beta type-8 (Psmb8) from Rattus norvegicus (Rat).